A 215-amino-acid chain; its full sequence is Small ribosomal subunit protein uS3 (215 aa).

A KH type-2 domain is found at 38–106; it reads LRAFLKKKLF…EVLIDIQEIR (69 aa).

Belongs to the universal ribosomal protein uS3 family. In terms of assembly, part of the 30S ribosomal subunit. Forms a tight complex with proteins S10 and S14.

In terms of biological role, binds the lower part of the 30S subunit head. Binds mRNA in the 70S ribosome, positioning it for translation. The protein is Small ribosomal subunit protein uS3 of Desulforapulum autotrophicum (strain ATCC 43914 / DSM 3382 / VKM B-1955 / HRM2) (Desulfobacterium autotrophicum).